The primary structure comprises 63 residues: Trypsin inhibitor 5 (63 aa).

Positions 1–21 (MASVAESSGVVEVIELISDGG) are cleaved as a signal peptide. Positions 22–34 (NDLPRKIMSGRHG) are excised as a propeptide. Cystine bridges form between Cys-37–Cys-54, Cys-44–Cys-56, and Cys-50–Cys-62.

Belongs to the protease inhibitor I7 (squash-type serine protease inhibitor) family.

The protein localises to the secreted. In terms of biological role, inhibits trypsin. The polypeptide is Trypsin inhibitor 5 (Luffa aegyptiaca (Sponge gourd)).